The primary structure comprises 83 residues: Protein CASPARIAN STRIP INTEGRITY FACTOR 2 (83 aa).

The N-terminal stretch at 1 to 28 is a signal peptide; the sequence is MGLLPLVKKLGFIIFLLVSASAFALCSA. The disordered stretch occupies residues 61 to 83; the sequence is SRDYGHSSPKPKLVRPPFKLIPN. Residue Tyr-64 is modified to Sulfotyrosine. Hydroxyproline occurs at positions 69 and 71.

Interacts with the specific receptor kinases GSO1 and GSO2. In terms of tissue distribution, expressed exclusively in the root stele.

In terms of biological role, peptide hormone required for contiguous Casparian strip diffusion barrier formation in roots via the regulation of CASPs protein expression and distribution in a GSO1-GSO2 signaling pathway. The Casparian strip is required for ion homeostasis (e.g. iron and potassium ions). The protein is Protein CASPARIAN STRIP INTEGRITY FACTOR 2 of Arabidopsis thaliana (Mouse-ear cress).